We begin with the raw amino-acid sequence, 238 residues long: Probable transcriptional regulatory protein YeeN (238 aa).

It belongs to the TACO1 family. YeeN subfamily.

The protein localises to the cytoplasm. This Shigella flexneri protein is Probable transcriptional regulatory protein YeeN.